A 349-amino-acid chain; its full sequence is MKEVGIVGYGSDLPKYRIKAEEIAKAWGKDAEAIKKGLVVNEKSVPGPDEDSATIAVQAARRALSRSGINPKNIGAVYVGSESHPYAVKPTSGIVAEAVCTSPEVTAADLEFACKAGTAGIQMCMGLVSSGMMDYAMAVGVDTAQGAPGDALEYTAAAGGAAYIIGGKKEELIAKFNGTYSYTTDTPDFWRREHEHYPKHGGRFTGEPAYFRHVLSAAKGMMEKMDTTTKDYDYCVFHQPNGKFYLSAAKQLGFNENQYRYGLLTPYLGNTYSGAVPLGLSNILDHSKTGDRIFVVSYGSGAGSDAFDITVTDRISEVINKAVTTEELLSRKKYIDYAVYLKYRGKIRM.

Residues Asp30 and Ala31 each coordinate (3S)-3-hydroxy-3-methylglutaryl-CoA. Glu82 functions as the Proton donor/acceptor in the catalytic mechanism. (3S)-3-hydroxy-3-methylglutaryl-CoA contacts are provided by Cys114 and Thr155. Cys114 functions as the Acyl-thioester intermediate in the catalytic mechanism. Residue Arg203 coordinates CoA. (3S)-3-hydroxy-3-methylglutaryl-CoA is bound by residues Thr205 and His238. The active-site Proton donor/acceptor is the His238. A CoA-binding site is contributed by Lys243. (3S)-3-hydroxy-3-methylglutaryl-CoA-binding residues include Asn270 and Ser300.

The protein belongs to the thiolase-like superfamily. Archaeal HMG-CoA synthase family. In terms of assembly, interacts with acetoacetyl-CoA thiolase that catalyzes the precedent step in the pathway and with a DUF35 protein. The acetoacetyl-CoA thiolase/HMG-CoA synthase complex channels the intermediate via a fused CoA-binding site, which allows for efficient coupling of the endergonic thiolase reaction with the exergonic HMGCS reaction.

The catalysed reaction is acetoacetyl-CoA + acetyl-CoA + H2O = (3S)-3-hydroxy-3-methylglutaryl-CoA + CoA + H(+). Its pathway is metabolic intermediate biosynthesis; (R)-mevalonate biosynthesis; (R)-mevalonate from acetyl-CoA: step 2/3. In terms of biological role, catalyzes the condensation of acetyl-CoA with acetoacetyl-CoA to form 3-hydroxy-3-methylglutaryl-CoA (HMG-CoA). Functions in the mevalonate (MVA) pathway leading to isopentenyl diphosphate (IPP), a key precursor for the biosynthesis of isoprenoid compounds that are building blocks of archaeal membrane lipids. The chain is Hydroxymethylglutaryl-CoA synthase from Methanococcus vannielii (strain ATCC 35089 / DSM 1224 / JCM 13029 / OCM 148 / SB).